We begin with the raw amino-acid sequence, 33 residues long: Alpha-amanitin proprotein (33 aa).

Residues M1–P10 constitute a propeptide that is removed on maturation. At I11 the chain carries (3R,4R)-4,5-dihydroxyisoleucine; in form alpha-amanitin. I11 is modified ((3R,4S)-4-hydroxyisoleucine; in form gamma-amanitin). Positions I11–P18 form a cross-link, cyclopeptide (Ile-Pro). The 2'-cysteinyl-6'-hydroxytryptophan sulfoxide (Trp-Cys) cross-link spans W12 to C16. P18 carries the post-translational modification 4-hydroxyproline. Positions C19–A33 are excised as a propeptide.

Belongs to the MSDIN fungal toxin family. Post-translationally, processed by the macrocyclase-peptidase enzyme POPB to yield a toxic cyclic decapeptide. POPB first removes 10 residues from the N-terminus. Conformational trapping of the remaining peptide forces the enzyme to release this intermediate rather than proceed to macrocyclization. The enzyme rebinds the remaining peptide in a different conformation and catalyzes macrocyclization of the N-terminal 8 residues.

Its function is as follows. Major toxin belonging to the bicyclic octapeptides amatoxins that acts by binding non-competitively to RNA polymerase II and greatly slowing the elongation of transcripts from target promoters. In Amanita pallidorosea, this protein is Alpha-amanitin proprotein.